The chain runs to 324 residues: uncharacterized protein (324 aa).

This is an uncharacterized protein from Saccharomyces cerevisiae (strain ATCC 204508 / S288c) (Baker's yeast).